Consider the following 85-residue polypeptide: CDC42 small effector protein homolog (85 aa).

2 S-palmitoyl cysteine lipidation sites follow: Cys14 and Cys15. One can recognise a CRIB domain in the interval 37 to 50 (IGNPTNFVHTGHIG). 2 positions are modified to phosphoserine: Ser78 and Ser81.

The protein belongs to the CDC42SE/SPEC family.

The protein localises to the cytoplasm. It localises to the cytoskeleton. Its subcellular location is the cell membrane. In terms of biological role, probably involved in the organization of the actin cytoskeleton by acting downstream of CDC42, inducing actin filament assembly. This is CDC42 small effector protein homolog (Spec2) from Drosophila melanogaster (Fruit fly).